Here is a 142-residue protein sequence, read N- to C-terminus: Nucleoside diphosphate kinase (142 aa).

Positions 11, 59, 87, 93, 104, and 114 each coordinate ATP. Catalysis depends on His-117, which acts as the Pros-phosphohistidine intermediate.

Belongs to the NDK family. As to quaternary structure, homotetramer. Mg(2+) serves as cofactor.

The protein resides in the cytoplasm. It catalyses the reaction a 2'-deoxyribonucleoside 5'-diphosphate + ATP = a 2'-deoxyribonucleoside 5'-triphosphate + ADP. It carries out the reaction a ribonucleoside 5'-diphosphate + ATP = a ribonucleoside 5'-triphosphate + ADP. Major role in the synthesis of nucleoside triphosphates other than ATP. The ATP gamma phosphate is transferred to the NDP beta phosphate via a ping-pong mechanism, using a phosphorylated active-site intermediate. The protein is Nucleoside diphosphate kinase of Dechloromonas aromatica (strain RCB).